The sequence spans 150 residues: uncharacterized protein (150 aa).

A disordered region spans residues 49 to 88; sequence KEWAENASTDEIDDFLTHDDETERDADPSSGSGPELMNKA. Over residues 63 to 75 the composition is skewed to basic and acidic residues; the sequence is FLTHDDETERDAD.

This is an uncharacterized protein from Bacillus subtilis (strain 168).